A 430-amino-acid polypeptide reads, in one-letter code: GTPase Obg (430 aa).

Residues 1 to 158 form the Obg domain; sequence MFIDTAKVFV…LNIVLELKLL (158 aa). Residues 159–331 enclose the OBG-type G domain; sequence ADVGLLGFPN…VMKEAARILK (173 aa). Residues 165-172, 190-194, 212-215, 282-285, and 312-314 each bind GTP; these read GFPNVGKS, FTTLK, DIPG, NKSD, and SAA. The Mg(2+) site is built by S172 and T192. The region spanning 345 to 430 is the OCT domain; the sequence is MYIPEEKRFT…LNDFEFEYIL (86 aa).

This sequence belongs to the TRAFAC class OBG-HflX-like GTPase superfamily. OBG GTPase family. As to quaternary structure, monomer. The cofactor is Mg(2+).

The protein resides in the cytoplasm. Functionally, an essential GTPase which binds GTP, GDP and possibly (p)ppGpp with moderate affinity, with high nucleotide exchange rates and a fairly low GTP hydrolysis rate. Plays a role in control of the cell cycle, stress response, ribosome biogenesis and in those bacteria that undergo differentiation, in morphogenesis control. This Clostridium beijerinckii (strain ATCC 51743 / NCIMB 8052) (Clostridium acetobutylicum) protein is GTPase Obg.